The primary structure comprises 328 residues: DNA polymerase III subunit delta' (328 aa).

DNA polymerase III contains a core (composed of alpha, epsilon and theta chains) that associates with a tau subunit. This core dimerizes to form the POLIII' complex. PolIII' associates with the gamma complex (composed of gamma, delta, delta', psi and chi chains) and with the beta chain to form the complete DNA polymerase III complex.

The catalysed reaction is DNA(n) + a 2'-deoxyribonucleoside 5'-triphosphate = DNA(n+1) + diphosphate. Its function is as follows. DNA polymerase III is a complex, multichain enzyme responsible for most of the replicative synthesis in bacteria. This DNA polymerase also exhibits 3' to 5' exonuclease activity. The sequence is that of DNA polymerase III subunit delta' (holB) from Buchnera aphidicola subsp. Schizaphis graminum (strain Sg).